A 485-amino-acid polypeptide reads, in one-letter code: Pre-glycoprotein polyprotein GP complex (485 aa).

A lipid anchor (N-myristoyl glycine; by host) is attached at Gly-2. The Extracellular segment spans residues 2 to 17 (GQFISFMQEIPTFLQE). A helical transmembrane segment spans residues 18 to 33 (ALNIALVAVSLIAIIK). Residues 34–58 (GVVNLYKSGLFQFFVFLALAGRSCT) lie on the Cytoplasmic side of the membrane. Cys-57 is a binding site for Zn(2+). Residues 59–424 (EEAFKIGLHT…QGKTPLTLVD (366 aa)) lie on the Extracellular side of the membrane. Intrachain disulfides connect Cys-92–Cys-226, Cys-135–Cys-164, Cys-207–Cys-213, Cys-271–Cys-284, Cys-293–Cys-302, and Cys-356–Cys-377. Residues Asn-95 and Asn-105 are each glycosylated (N-linked (GlcNAc...) asparagine; by host). 2 N-linked (GlcNAc...) asparagine; by host glycosylation sites follow: Asn-166 and Asn-178. Positions 250–286 (LKAFFSWSLTDSSGKDTPGGYCLEEWMLVAAKMKCFG) are fusion. The tract at residues 287 to 355 (NTAVAKCNLN…KIRELMSVPY (69 aa)) is HR1. Residues Asn-357, Asn-365, Asn-382, and Asn-387 are each glycosylated (N-linked (GlcNAc...) asparagine; by host). Positions 360-423 (KFWYVNHTLS…RQGKTPLTLV (64 aa)) are HR2. The helical transmembrane segment at 425–445 (ICFWSTVFFTASLFLHLVGIP) threads the bilayer. The Cytoplasmic portion of the chain corresponds to 446–485 (THRHIRGEACPLPHRLNSLGGCRCGKYPNLKKPTVWRRGH). 7 residues coordinate Zn(2+): His-447, His-449, Cys-455, His-459, Cys-467, Cys-469, and His-485.

It belongs to the arenaviridae GPC protein family. In terms of assembly, interacts with glycoprotein G2. Part of the GP complex (GP-C) together with glycoprotein G1 and glycoprotein G2. The GP-complex interacts with protein Z, which interacts with ribonucleocapsid; these interactions may induce virion budding. Homotrimer; disulfide-linked. In pre-fusion state, G1 homotrimers bind G2 homotrimers via ionic interactions. Part of the GP complex (GP-C) together with glycoprotein G2 and the stable signal peptide. Interacts with host TFRC. The GP-complex interacts with protein Z, which interacts with ribonucleocapsid; these interactions may induce virion budding. As to quaternary structure, homotrimer. Interacts with the stable signal peptide. In pre-fusion state, G2 homotrimers bind G1 homotrimers via ionic interactions. Part of the GP complex (GP-C) together with glycoprotein G1 and the stable signal peptide. Acidification in the endosome triggers rearrangements, which ultimately leads to a 6 helix bundle formed by the two heptad repeat domains (HR1 and HR2) in post-fusion state. The GP-complex interacts with protein Z, which interacts with ribonucleocapsid; these interactions may induce virion budding. In terms of processing, specific enzymatic cleavages in vivo yield mature proteins. GP-C polyprotein is cleaved in the endoplasmic reticulum by the host protease MBTPS1. Only cleaved glycoprotein is incorporated into virions. The SSP remains stably associated with the GP complex following cleavage by signal peptidase and plays crucial roles in the trafficking of GP through the secretory pathway. Post-translationally, myristoylation is necessary for GP2-mediated fusion activity.

The protein resides in the virion membrane. It is found in the host endoplasmic reticulum membrane. Its subcellular location is the host Golgi apparatus membrane. The protein localises to the host cell membrane. Functions as a cleaved signal peptide that is retained as the third component of the GP complex (GP-C). Helps to stabilize the spike complex in its native conformation. The SSP is required for efficient glycoprotein expression, post-translational maturation cleavage of G1 and G2, glycoprotein transport to the cell surface plasma membrane, formation of infectious virus particles, and acid pH-dependent glycoprotein-mediated cell fusion. Its function is as follows. Forms the virion spikes together with glycoprotein G2. The glycoprotein spike trimers are connected to the underlying matrix. Mediates virus attachment to host TFRC. This attachment induces virion internalization predominantly through clathrin-mediated endocytosis. Functionally, forms the virion spikes together with glycoprotein G1. The glycoprotein spike trimers are connected to the underlying matrix. Class I viral fusion protein that directs fusion of viral and host endosomal membranes, leading to delivery of the nucleocapsid into the cytoplasm. Membrane fusion is mediated by irreversible conformational changes induced by acidification. The polypeptide is Pre-glycoprotein polyprotein GP complex (Junin mammarenavirus (JUNV)).